The primary structure comprises 97 residues: Aspartyl/glutamyl-tRNA(Asn/Gln) amidotransferase subunit C (97 aa).

Belongs to the GatC family. As to quaternary structure, heterotrimer of A, B and C subunits.

The enzyme catalyses L-glutamyl-tRNA(Gln) + L-glutamine + ATP + H2O = L-glutaminyl-tRNA(Gln) + L-glutamate + ADP + phosphate + H(+). The catalysed reaction is L-aspartyl-tRNA(Asn) + L-glutamine + ATP + H2O = L-asparaginyl-tRNA(Asn) + L-glutamate + ADP + phosphate + 2 H(+). Allows the formation of correctly charged Asn-tRNA(Asn) or Gln-tRNA(Gln) through the transamidation of misacylated Asp-tRNA(Asn) or Glu-tRNA(Gln) in organisms which lack either or both of asparaginyl-tRNA or glutaminyl-tRNA synthetases. The reaction takes place in the presence of glutamine and ATP through an activated phospho-Asp-tRNA(Asn) or phospho-Glu-tRNA(Gln). This chain is Aspartyl/glutamyl-tRNA(Asn/Gln) amidotransferase subunit C, found in Synechococcus sp. (strain JA-3-3Ab) (Cyanobacteria bacterium Yellowstone A-Prime).